Reading from the N-terminus, the 199-residue chain is Securin (199 aa).

2 disordered regions span residues 1-23 (MATLIFVDKDNEEPGSRLASKDG) and 58-108 (RKAL…DDAY). Ala-2 bears the N-acetylalanine mark. Residues 7–23 (VDKDNEEPGSRLASKDG) are compositionally biased toward basic and acidic residues. A D-box motif is present at residues 58–61 (RKAL). The TEK-box 1 signature appears at 68–70 (TEK). The segment covering 76–85 (KPLQSKQPTL) has biased composition (polar residues). The short motif at 91-93 (TEK) is the TEK-box 2 element. Ser-162 is subject to Phosphoserine. Positions 179-192 (PPSALSALDVELPP) match the SH3-binding motif.

Belongs to the securin family. In terms of assembly, interacts with the caspase-like ESPL1, and prevents its protease activity by covering its active site. Interacts with p53/TP53 and blocks its activity probably by blocking its binding to DNA. Interacts with the Ku 70 kDa subunit of ds-DNA kinase. Interacts with PTTG1IP. Interacts with RPS10 and DNAJA1. Post-translationally, phosphorylated at Ser-162 by CDK1 during mitosis. Phosphorylated in vitro by ds-DNA kinase. In terms of processing, ubiquitinated through 'Lys-11' linkage of ubiquitin moieties by the anaphase promoting complex (APC) at the onset of anaphase, conducting to its degradation. 'Lys-11'-linked ubiquitination is mediated by the E2 ligase UBE2C/UBCH10. In terms of tissue distribution, expressed at low level in most tissues, except in adult testis, where it is highly expressed. Expressed in both spermatocytes and spermatids.

It localises to the cytoplasm. The protein localises to the nucleus. Its function is as follows. Regulatory protein, which plays a central role in chromosome stability, in the p53/TP53 pathway, and DNA repair. Probably acts by blocking the action of key proteins. During the mitosis, it blocks Separase/ESPL1 function, preventing the proteolysis of the cohesin complex and the subsequent segregation of the chromosomes. At the onset of anaphase, it is ubiquitinated, conducting to its destruction and to the liberation of ESPL1. Its function is however not limited to a blocking activity, since it is required to activate ESPL1. Negatively regulates the transcriptional activity and related apoptosis activity of p53/TP53. The negative regulation of p53/TP53 may explain the strong transforming capability of the protein when it is overexpressed. May also play a role in DNA repair via its interaction with Ku, possibly by connecting DNA damage-response pathways with sister chromatid separation. The chain is Securin (Pttg1) from Rattus norvegicus (Rat).